The sequence spans 1383 residues: Cell surface hyaluronidase CEMIP2 (1383 aa).

A disordered region spans residues Met1 to Thr50. The Cytoplasmic portion of the chain corresponds to Met1–Thr82. Residues Ser10 and Ser63 each carry the phosphoserine modification. A helical; Signal-anchor for type II membrane protein membrane pass occupies residues Phe83–Ile103. The Extracellular portion of the chain corresponds to Ser104–His1383. One can recognise a G8 domain in the interval Arg121 to Arg245. N-linked (GlcNAc...) asparagine glycans are attached at residues Asn248 and Asn292. The region spanning Gly255–Val412 is the GG-type lectin 1 domain. 3 PbH1 repeats span residues His669–Phe691, Thr711–Lys733, and Gly791–Ser812. Asn914 and Asn1234 each carry an N-linked (GlcNAc...) asparagine glycan. The 159-residue stretch at Lys1208–Thr1366 folds into the GG-type lectin 2 domain.

Belongs to the CEMIP family. As to expression, widely expressed.

The protein resides in the cell membrane. It catalyses the reaction Random hydrolysis of (1-&gt;4)-linkages between N-acetyl-beta-D-glucosamine and D-glucuronate residues in hyaluronate.. Functionally, cell surface hyaluronidase that mediates the initial cleavage of extracellular high-molecular-weight hyaluronan into intermediate-size hyaluronan of approximately 10-5 kDa fragments. Very specific to hyaluronan; not able to cleave chondroitin sulfate or dermatan sulfate. Has an essential function in systemic hyaluronan catabolism and turnover and regulates cell adhesion and migration via hyaluronan degradation at focal adhesion sites. Acts as a regulator of angiogenesis and heart morphogenesis by mediating degradation of extracellular hyaluronan, thereby regulating VEGF signaling. The chain is Cell surface hyaluronidase CEMIP2 from Homo sapiens (Human).